Reading from the N-terminus, the 116-residue chain is Large ribosomal subunit protein bL20 (116 aa).

This sequence belongs to the bacterial ribosomal protein bL20 family.

Its function is as follows. Binds directly to 23S ribosomal RNA and is necessary for the in vitro assembly process of the 50S ribosomal subunit. It is not involved in the protein synthesizing functions of that subunit. This Mycoplasmopsis pulmonis (strain UAB CTIP) (Mycoplasma pulmonis) protein is Large ribosomal subunit protein bL20.